Here is a 1032-residue protein sequence, read N- to C-terminus: Toll-like receptor 9 (1032 aa).

An N-terminal signal peptide occupies residues 1–25 (MGPCRGALHPLSLLVQAAALALALA). Residues 26 to 815 (QGTLPAFLPC…QDLRLCLDEA (790 aa)) are Extracellular-facing. A disulfide bond links Cys-35 and Cys-45. Residue 47–51 (WLFLK) participates in DNA binding. LRR repeat units follow at residues 62–85 (RGNV…DFVH), 87–110 (VHLR…HFPC), 122–147 (VPTL…SLVS), 150–166 (LSRT…LAGL), 167–190 (YALR…ALQV), 198–221 (LGNL…LPPS), 223–242 (EYLL…DLAN), 243–268 (LTAL…CREC), 283–306 (LSHL…WFHG), 308–332 (GNLM…AFYG), 333–356 (LARL…HLHL), 363–386 (LLSL…TLQS), 390–413 (LPML…IFGA), 415–440 (PGLR…TGEV), 472–496 (CRTL…MFVR), 498–521 (ARLQ…QFVP), 522–545 (LSNL…SFTE), 547–574 (PRLE…SFVA), 576–600 (LPAL…LRSA), 602–624 (LRAL…LYLR), 629–652 (LRSL…NLDN), 654–677 (PKSL…SLAL), 678–701 (LPKL…SLPN), 703–725 (TQLQ…FFAL), 726–749 (AVRL…WFGS), and 751–774 (AGAL…TFVD). Asn-64 carries an N-linked (GlcNAc...) asparagine glycan. Residues 72 to 77 (SNRIHH) and 95 to 109 (KWNC…MHFP) each bind DNA. Cys-98 and Cys-110 form a disulfide bridge. An N-linked (GlcNAc...) asparagine glycan is attached at Asn-129. DNA contacts are provided by residues Tyr-132, Arg-152, and 179-181 (YYK). Residues Cys-178 and Cys-184 are joined by a disulfide bond. Asn-200 is a glycosylation site (N-linked (GlcNAc...) asparagine). Position 208 (Tyr-208) interacts with DNA. N-linked (GlcNAc...) asparagine glycans are attached at residues Asn-210 and Asn-242. Cystine bridges form between Cys-255-Cys-268 and Cys-258-Cys-265. A lipid anchor (S-palmitoyl cysteine) is attached at Cys-258. DNA is bound at residue Arg-262. A lipid anchor (S-palmitoyl cysteine) is attached at Cys-265. A glycan (N-linked (GlcNAc...) asparagine) is linked at Asn-340. Cys-472 and Cys-502 are oxidised to a cystine. Residues Asn-476 and Asn-515 are each glycosylated (N-linked (GlcNAc...) asparagine). N-linked (GlcNAc...) asparagine glycosylation is present at Asn-569. N-linked (GlcNAc...) asparagine glycosylation is found at Asn-671, Asn-696, and Asn-701. Asn-733 is a glycosylation site (N-linked (GlcNAc...) asparagine). Disulfide bonds link Cys-766/Cys-792 and Cys-768/Cys-811. Residues 816-836 (LSWVCFSLSLLAVALSLAVPM) traverse the membrane as a helical segment. Over 837–1032 (LHQLCGWDLW…QNFCRGPTTA (196 aa)) the chain is Cytoplasmic. A TIR domain is found at 868-1013 (LAYDAFVVFD…SFWAQLGTAL (146 aa)).

This sequence belongs to the Toll-like receptor family. In terms of assembly, monomer and homodimer. Exists as a monomer in the absence of unmethylated cytidine-phosphate-guanosine (CpG) ligand. Proteolytic processing of an insertion loop (Z-loop) is required for homodimerization upon binding to the unmethylated CpG ligand leading to its activation. Interacts with MYD88 via their respective TIR domains. Interacts with BTK. Interacts (via transmembrane domain) with UNC93B1. Interacts with CD300LH; the interaction may promote full activation of TLR9-triggered innate responses. Interacts with CNPY3 and HSP90B1; this interaction is required for proper folding in the endoplasmic reticulum. Interacts with SMPDL3B. Interacts with CD82; this interaction is essential for TLR9-dependent myddosome formation in response to CpG stimulation. Activated by proteolytic cleavage of the flexible loop between repeats LRR14 and LRR15 within the ectodomain. Cleavage requires UNC93B1. Proteolytically processed by first removing the majority of the ectodomain by either asparagine endopeptidase (AEP) or a cathepsin followed by a trimming event that is solely cathepsin mediated and required for optimal receptor signaling. Post-translationally, palmitoylated by ZDHHC3 in the Golgi regulates TLR9 trafficking from the Golgi to endosomes. Depalmitoylation by PPT1 controls the release of TLR9 from UNC93B1 in endosomes.

The protein resides in the endoplasmic reticulum membrane. Its subcellular location is the endosome. The protein localises to the lysosome. It localises to the cytoplasmic vesicle. It is found in the phagosome. Key component of innate and adaptive immunity. TLRs (Toll-like receptors) control host immune response against pathogens through recognition of molecular patterns specific to microorganisms. TLR9 is a nucleotide-sensing TLR which is activated by unmethylated cytidine-phosphate-guanosine (CpG) dinucleotides. Acts via MYD88 and TRAF6, leading to NF-kappa-B activation, cytokine secretion and the inflammatory response. Upon CpG stimulation, induces B-cell proliferation, activation, survival and antibody production. The chain is Toll-like receptor 9 (TLR9) from Canis lupus familiaris (Dog).